We begin with the raw amino-acid sequence, 494 residues long: Glutamyl-tRNA(Gln) amidotransferase subunit A, mitochondrial (494 aa).

Catalysis depends on charge relay system residues Lys79 and Ser160. Ser184 acts as the Acyl-ester intermediate in catalysis.

Belongs to the amidase family. GatA subfamily. Subunit of the heterotrimeric GatCAB amidotransferase (AdT) complex, composed of A, B and C subunits.

The protein resides in the mitochondrion. It catalyses the reaction L-glutamyl-tRNA(Gln) + L-glutamine + ATP + H2O = L-glutaminyl-tRNA(Gln) + L-glutamate + ADP + phosphate + H(+). Allows the formation of correctly charged Gln-tRNA(Gln) through the transamidation of misacylated Glu-tRNA(Gln) in the mitochondria. The reaction takes place in the presence of glutamine and ATP through an activated gamma-phospho-Glu-tRNA(Gln). This Aedes aegypti (Yellowfever mosquito) protein is Glutamyl-tRNA(Gln) amidotransferase subunit A, mitochondrial.